The primary structure comprises 316 residues: Probable cell division protein WhiA (316 aa).

Positions 275 to 309 (TLKELGEMVSGGKISKSGINHRLRKIDEIAEKLRA) form a DNA-binding region, H-T-H motif.

Belongs to the WhiA family.

Functionally, involved in cell division and chromosome segregation. The polypeptide is Probable cell division protein WhiA (Bacillus cereus (strain B4264)).